A 243-amino-acid polypeptide reads, in one-letter code: Protein IN2-1 (243 aa).

Positions 1–26 are disordered; it reads MAAAAGPSSSVKESLPPALGSTSQPP. Residues 31-112 enclose the GST N-terminal domain; it reads GTTRLYICYF…YIDSNFDGPA (82 aa). Glutathione contacts are provided by residues Lys70, Val84, and 96–97; that span reads ES. The region spanning 109 to 240 is the GST C-terminal domain; that stretch reads DGPALLPEDA…FLLDLAKSHL (132 aa).

This sequence belongs to the GST superfamily. HSP26 family. As to expression, leaves and roots. It is more strongly induced in the leaves relative to the roots.

This Zea mays (Maize) protein is Protein IN2-1 (IN2-1).